The sequence spans 50 residues: Protein HokA (50 aa).

The helical transmembrane segment at 7–24 (LLSLIVICFTLLFFTWMI) threads the bilayer.

The protein belongs to the Hok/Gef family.

It is found in the cell inner membrane. In terms of biological role, toxic component of a type I toxin-antitoxin (TA) system. When overexpressed kills cells within minutes; causes collapse of the transmembrane potential and arrest of respiration. Its toxic effect is probably neutralized by antisense antitoxin RNA SokA. The sequence is that of Protein HokA from Escherichia coli (strain K12).